The sequence spans 380 residues: Alkaline protease (380 aa).

The N-terminal stretch at 1-27 (MKKPLGKIVASTALLISVAFSSSIASA) is a signal peptide. The propeptide occupies 28–112 (AEEAKEKYLI…EEDAEVTTMA (85 aa)). The Inhibitor I9 domain maps to 34–111 (KYLIGFNEQE…IEEDAEVTTM (78 aa)). Position 113 (Gln-113) interacts with Ca(2+). The 264-residue stretch at 116 to 379 (PWGISRVQAP…SGLVNAEAAT (264 aa)) folds into the Peptidase S8 domain. Residue Asp-143 is the Charge relay system of the active site. A Ca(2+)-binding site is contributed by Asp-151. The active-site Charge relay system is His-173. Positions 184, 186, 188, 190, 274, 276, and 279 each coordinate Ca(2+). The active-site Charge relay system is the Ser-326.

It belongs to the peptidase S8 family. It depends on Ca(2+) as a cofactor.

It is found in the secreted. This Alkalihalobacillus alcalophilus (Bacillus alcalophilus) protein is Alkaline protease.